The chain runs to 393 residues: Protein TsgA (393 aa).

The next 12 helical transmembrane spans lie at 11-31, 51-71, 78-98, 101-121, 134-154, 162-182, 206-226, 245-265, 273-293, 297-317, 332-352, and 361-381; these read WISF…GMVM, FLNA…EIVP, FGFL…SLAL, AAMF…TFLV, LLFT…IAAF, WYWV…LTFG, IGVL…LGFI, TLVS…SFIL, ILTV…TGTP, AWSI…IITL, FVLT…GPIV, and LLTA…LGFV.

The protein belongs to the major facilitator superfamily. TsgA family.

The protein resides in the cell inner membrane. This is Protein TsgA from Escherichia coli O6:K15:H31 (strain 536 / UPEC).